A 197-amino-acid chain; its full sequence is Nucleoid occlusion factor SlmA (197 aa).

In terms of domain architecture, HTH tetR-type spans 7–67 (INRREHILQC…GLIEFIEESL (61 aa)). Residues 30–49 (TTAKLASEVGVSEAALYRHF) constitute a DNA-binding region (H-T-H motif).

Belongs to the nucleoid occlusion factor SlmA family. As to quaternary structure, homodimer. Interacts with FtsZ.

It is found in the cytoplasm. The protein resides in the nucleoid. Required for nucleoid occlusion (NO) phenomenon, which prevents Z-ring formation and cell division over the nucleoid. Acts as a DNA-associated cell division inhibitor that binds simultaneously chromosomal DNA and FtsZ, and disrupts the assembly of FtsZ polymers. SlmA-DNA-binding sequences (SBS) are dispersed on non-Ter regions of the chromosome, preventing FtsZ polymerization at these regions. This Shewanella oneidensis (strain ATCC 700550 / JCM 31522 / CIP 106686 / LMG 19005 / NCIMB 14063 / MR-1) protein is Nucleoid occlusion factor SlmA.